Consider the following 218-residue polypeptide: Superoxide dismutase [Mn], mitochondrial (218 aa).

4 residues coordinate Mn(2+): histidine 27, histidine 84, aspartate 174, and histidine 178.

It belongs to the iron/manganese superoxide dismutase family. Homotetramer. The cofactor is Mn(2+).

It is found in the mitochondrion matrix. It carries out the reaction 2 superoxide + 2 H(+) = H2O2 + O2. Destroys superoxide anion radicals which are normally produced within the cells and which are toxic to biological systems. The protein is Superoxide dismutase [Mn], mitochondrial (SODA) of Chlamydomonas reinhardtii (Chlamydomonas smithii).